The following is a 373-amino-acid chain: Chaperone protein DnaJ (373 aa).

Residues 4–69 enclose the J domain; sequence NYYEILEISQ…EKRSIYDRYG (66 aa). The CR-type zinc finger occupies 133–210; the sequence is GCKKKIDFSY…CHGNGYEEIK (78 aa). Zn(2+)-binding residues include Cys-146, Cys-149, Cys-162, Cys-165, Cys-184, Cys-187, Cys-198, and Cys-201. CXXCXGXG motif repeat units lie at residues 146–153, 162–169, 184–191, and 198–205; these read CKSCKGSG, CPHCGGKG, CDHCKGSG, and CKTCHGNG.

It belongs to the DnaJ family. Homodimer. It depends on Zn(2+) as a cofactor.

It localises to the cytoplasm. Functionally, participates actively in the response to hyperosmotic and heat shock by preventing the aggregation of stress-denatured proteins and by disaggregating proteins, also in an autonomous, DnaK-independent fashion. Unfolded proteins bind initially to DnaJ; upon interaction with the DnaJ-bound protein, DnaK hydrolyzes its bound ATP, resulting in the formation of a stable complex. GrpE releases ADP from DnaK; ATP binding to DnaK triggers the release of the substrate protein, thus completing the reaction cycle. Several rounds of ATP-dependent interactions between DnaJ, DnaK and GrpE are required for fully efficient folding. Also involved, together with DnaK and GrpE, in the DNA replication of plasmids through activation of initiation proteins. This is Chaperone protein DnaJ from Campylobacter lari (strain RM2100 / D67 / ATCC BAA-1060).